The sequence spans 522 residues: O-fucosyltransferase 38 (522 aa).

The helical; Signal-anchor for type II membrane protein transmembrane segment at 26–46 threads the bilayer; that stretch reads AISLYLIFVFAFTIWVLVFSS. Residues 54–67 show a composition bias toward basic and acidic residues; sequence DHTKHQQQHHRDLI. The interval 54–73 is disordered; it reads DHTKHQQQHHRDLIDSESFP. Asn-147 carries an N-linked (GlcNAc...) asparagine glycan. Position 284-286 (284-286) interacts with substrate; sequence HLR. Asn-325 is a glycosylation site (N-linked (GlcNAc...) asparagine). The disordered stretch occupies residues 475–496; that stretch reads HKDRQGAPRRRKGPTQGIKGRA.

This sequence belongs to the glycosyltransferase GT106 family.

The protein resides in the membrane. It participates in glycan metabolism. This chain is O-fucosyltransferase 38, found in Arabidopsis thaliana (Mouse-ear cress).